Reading from the N-terminus, the 480-residue chain is Aspartyl/glutamyl-tRNA(Asn/Gln) amidotransferase subunit B (480 aa).

It belongs to the GatB/GatE family. GatB subfamily. Heterotrimer of A, B and C subunits.

The enzyme catalyses L-glutamyl-tRNA(Gln) + L-glutamine + ATP + H2O = L-glutaminyl-tRNA(Gln) + L-glutamate + ADP + phosphate + H(+). It catalyses the reaction L-aspartyl-tRNA(Asn) + L-glutamine + ATP + H2O = L-asparaginyl-tRNA(Asn) + L-glutamate + ADP + phosphate + 2 H(+). Its function is as follows. Allows the formation of correctly charged Asn-tRNA(Asn) or Gln-tRNA(Gln) through the transamidation of misacylated Asp-tRNA(Asn) or Glu-tRNA(Gln) in organisms which lack either or both of asparaginyl-tRNA or glutaminyl-tRNA synthetases. The reaction takes place in the presence of glutamine and ATP through an activated phospho-Asp-tRNA(Asn) or phospho-Glu-tRNA(Gln). The protein is Aspartyl/glutamyl-tRNA(Asn/Gln) amidotransferase subunit B of Streptococcus agalactiae serotype Ia (strain ATCC 27591 / A909 / CDC SS700).